The primary structure comprises 243 residues: uncharacterized protein (243 aa).

It belongs to the methyltransferase superfamily.

This is an uncharacterized protein from Mycobacterium tuberculosis (strain CDC 1551 / Oshkosh).